Here is a 368-residue protein sequence, read N- to C-terminus: 3-isopropylmalate dehydrogenase (368 aa).

79–92 provides a ligand contact to NAD(+); it reads GPRYEGLPWDLRPE. Residues Arg99, Arg109, Arg138, and Asp228 each coordinate substrate. Mg(2+) contacts are provided by Asp228, Asp252, and Asp256. 292-304 serves as a coordination point for NAD(+); that stretch reads GSAPDIAGQDRAN.

The protein belongs to the isocitrate and isopropylmalate dehydrogenases family. LeuB type 1 subfamily. In terms of assembly, homodimer. It depends on Mg(2+) as a cofactor. Requires Mn(2+) as cofactor.

Its subcellular location is the cytoplasm. It carries out the reaction (2R,3S)-3-isopropylmalate + NAD(+) = 4-methyl-2-oxopentanoate + CO2 + NADH. Its pathway is amino-acid biosynthesis; L-leucine biosynthesis; L-leucine from 3-methyl-2-oxobutanoate: step 3/4. In terms of biological role, catalyzes the oxidation of 3-carboxy-2-hydroxy-4-methylpentanoate (3-isopropylmalate) to 3-carboxy-4-methyl-2-oxopentanoate. The product decarboxylates to 4-methyl-2 oxopentanoate. In Symbiobacterium thermophilum (strain DSM 24528 / JCM 14929 / IAM 14863 / T), this protein is 3-isopropylmalate dehydrogenase.